Here is a 2338-residue protein sequence, read N- to C-terminus: Proto-oncogene tyrosine-protein kinase ROS (2338 aa).

Positions 1-27 (MKRIRWLTPKPATFVVLGCVWISVAQG) are cleaved as a signal peptide. Residues 28–1853 (TILSSCLTSC…EDGFWITETS (1826 aa)) lie on the Extracellular side of the membrane. N-linked (GlcNAc...) asparagine glycosylation is found at Asn-52 and Asn-77. Fibronectin type-III domains are found at residues 110–205 (LPTA…VPET) and 206–294 (APFI…PSPA). N-linked (GlcNAc...) asparagine glycans are attached at residues Asn-333, Asn-361, Asn-480, Asn-623, Asn-934, and Asn-1010. In terms of domain architecture, Fibronectin type-III 3 spans 566 to 666 (LPGHPQEVSV…EPSVGTTLVP (101 aa)). Fibronectin type-III domains lie at 942-1037 (IPDS…SVPS) and 1038-1145 (APEN…TSEI). Residue Asn-1298 is glycosylated (N-linked (GlcNAc...) asparagine). 4 consecutive Fibronectin type-III domains span residues 1440-1548 (VASN…TKSG), 1549-1648 (VPGA…VNMF), 1650-1743 (TPEK…TKAG), and 1744-1845 (VPSK…LVED). N-linked (GlcNAc...) asparagine glycosylation occurs at Asn-1675. A helical transmembrane segment spans residues 1854-1874 (FILTIIVGIFLVATVPLTFVW). The Cytoplasmic portion of the chain corresponds to 1875–2338 (HRSLKNHKAT…AHSGHGDVSE (464 aa)). The Protein kinase domain occupies 1937-2210 (LSLRLLLGSG…YNIQDQLQLF (274 aa)). ATP is bound by residues 1943–1951 (LGSGAFGEV) and Lys-1972. The active-site Proton acceptor is Asp-2071. Tyr-2266 is modified (phosphotyrosine; by autocatalysis). The segment at 2277 to 2314 (EDRYEGPLGSKESGLHDLKKDERQPADKDFCQQPQVAY) is disordered. Residues 2289-2306 (SGLHDLKKDERQPADKDF) show a composition bias toward basic and acidic residues. Phosphotyrosine; by autocatalysis is present on Tyr-2325.

The protein belongs to the protein kinase superfamily. Tyr protein kinase family. Insulin receptor subfamily. In terms of assembly, interacts with PTPN11; may activate the PI3 kinase-mTOR signaling pathway. Interacts with VAV3; constitutive interaction mediating VAV3 phosphorylation. Interacts with PTPN6 (via SH2 1 domain); the interaction is direct and promotes ROS1 dephosphorylation. Phosphorylated. Probably autophosphorylates. Phosphorylation at Tyr-2266 is required for the interaction with PTPN6 that mediates ROS1 dephosphorylation. Phosphorylation at Tyr-2266 stimulates the kinase activity and the activation of the ERK1 signaling cascade. Phosphorylation at Tyr-2266 and/or Tyr-2325 recruits PTPN11. In terms of tissue distribution, expressed in heart, lung, kidney and testis.

The protein localises to the cell membrane. The enzyme catalyses L-tyrosyl-[protein] + ATP = O-phospho-L-tyrosyl-[protein] + ADP + H(+). Its activity is regulated as follows. Inhibited by dephosphorylation by PTPN6. Orphan receptor tyrosine kinase (RTK) that plays a role in epithelial cell differentiation and regionalization of the proximal epididymal epithelium. NELL2 is an endogenous ligand for ROS1. Upon endogenous stimulation by NELL2, ROS1 activates the intracellular signaling pathway and triggers epididymal epithelial differentiation and subsequent sperm maturation. May activate several downstream signaling pathways related to cell differentiation, proliferation, growth and survival including the PI3 kinase-mTOR signaling pathway. Mediates the phosphorylation of PTPN11, an activator of this pathway. May also phosphorylate and activate the transcription factor STAT3 to control anchorage-independent cell growth. Mediates the phosphorylation and the activation of VAV3, a guanine nucleotide exchange factor regulating cell morphology. May activate other downstream signaling proteins including AKT1, MAPK1, MAPK3, IRS1 and PLCG2. The protein is Proto-oncogene tyrosine-protein kinase ROS (Ros1) of Rattus norvegicus (Rat).